The sequence spans 665 residues: RNA-directed RNA polymerase (665 aa).

Residues 310–485 (NKEEKVKEWS…LKEGKVNPSP (176 aa)) form the RdRp catalytic domain. Residues aspartate 454, tyrosine 491, and glycine 495 each contribute to the Mg(2+) site.

Part of the packaging complex composed of RDRP, P4 and P7. Interacts with P7. It depends on Mg(2+) as a cofactor. Mn(2+) serves as cofactor.

The protein localises to the virion. The catalysed reaction is RNA(n) + a ribonucleoside 5'-triphosphate = RNA(n+1) + diphosphate. Rna-dependent RNA polymerase part of the packaging complex that packages the viral RNA segments, replicate them into a double-stranded form and transcribe them. This is RNA-directed RNA polymerase (P2) from Pseudomonas phage phi6 (Bacteriophage phi-6).